Here is a 718-residue protein sequence, read N- to C-terminus: Phenylalanine--tRNA ligase beta subunit (718 aa).

One can recognise a tRNA-binding domain in the interval 39–153 (LNEISGIKFG…IFDLESNPLK (115 aa)). Residues 386–460 (SKKTFLDLNY…RFYGLEKLKD (75 aa)) form the B5 domain. Mg(2+)-binding residues include D438, D444, and D448.

The protein belongs to the phenylalanyl-tRNA synthetase beta subunit family. Type 1 subfamily. As to quaternary structure, tetramer of two alpha and two beta subunits. Requires Mg(2+) as cofactor.

The protein resides in the cytoplasm. It carries out the reaction tRNA(Phe) + L-phenylalanine + ATP = L-phenylalanyl-tRNA(Phe) + AMP + diphosphate + H(+). The polypeptide is Phenylalanine--tRNA ligase beta subunit (Mesomycoplasma hyopneumoniae (strain J / ATCC 25934 / NCTC 10110) (Mycoplasma hyopneumoniae)).